The primary structure comprises 427 residues: Putative transporter YdfJ (427 aa).

At 1 to 7 the chain is on the cytoplasmic side; the sequence is MDFQLYS. A run of 2 helical transmembrane segments spans residues 8 to 28 and 29 to 49; these read LGAALVFHEIFFPESSTAMAL and ILAMGTYGAGYVARIVGAFIF. Topologically, residues 50–74 are cytoplasmic; the sequence is GKMGDRIGRKKVLFITITMMGICTT. The chain crosses the membrane as a helical span at residues 75–95; the sequence is LIGVLPTYAQIGVFAPILLVT. Topologically, residues 96–97 are periplasmic; that stretch reads LR. A helical membrane pass occupies residues 98-118; that stretch reads IIQGLGAGAEISGAGTMLAEY. At 119–132 the chain is on the cytoplasmic side; that stretch reads APKGKRGIISSFVA. A helical transmembrane segment spans residues 133–153; that stretch reads MGTNCGTLSATAIWAFMFFIL. Residues 154 to 157 are Periplasmic-facing; that stretch reads SKEE. A helical transmembrane segment spans residues 158–178; it reads LLAWGWRIPFLASVVVMVFAI. The Cytoplasmic portion of the chain corresponds to 179–225; sequence WLRMNLKESPVFEKVNDSNQPTAKPAPAGSMFQSKSFWLATGLRFGQ. A helical transmembrane segment spans residues 226–246; sequence AGNSGLIQTFLAGYLVQTLLF. At 247-251 the chain is on the periplasmic side; the sequence is NKAIP. The chain crosses the membrane as a helical span at residues 252–272; sequence TDALMISSILGFMTIPFLGWL. Topologically, residues 273-279 are cytoplasmic; that stretch reads SDKIGRR. A helical membrane pass occupies residues 280–300; that stretch reads IPYIIMNTSAIVLAWPMLSII. Residues 301–307 are Periplasmic-facing; sequence VDKSYAP. The helical transmembrane segment at 308–328 threads the bilayer; it reads STIMVALIVIHNCAVLGLFAL. The Cytoplasmic portion of the chain corresponds to 329-351; the sequence is ENITMAEMFGCKNRFTRMAISKE. Residues 352-372 form a helical membrane-spanning segment; the sequence is IGGLIASGFGPILAGIFCTMT. Glutamate 373 is a topological domain (periplasmic). A helical membrane pass occupies residues 374–394; sequence SWYPIAIMIMAYSVIGLISAL. The Cytoplasmic segment spans residues 395-427; that stretch reads KMPEVKDRDLSALEDAAEDQPRVVRAAQPSRSL.

This sequence belongs to the major facilitator superfamily. Metabolite:H+ Symporter (MHS) family (TC 2.A.1.6) family.

It is found in the cell inner membrane. In terms of biological role, when overexpressed in human HEK-293 cells forms an inward rectifying potassium channel. The polypeptide is Putative transporter YdfJ (ydfJ) (Escherichia coli (strain K12)).